Reading from the N-terminus, the 553-residue chain is Solute carrier family 45 member 3 (553 aa).

The next 11 helical transmembrane spans lie at 19–39, 52–72, 88–108, 120–140, 161–181, 198–218, 275–295, 323–343, 353–373, 382–402, and 522–542; these read LLVN…ITYV, FMTM…PLLG, FIWA…RAGW, LELA…QVCF, FSVY…LPAI, CLFG…LFVT, FVAE…YTDF, MGSL…LVMD, SVYL…CLSH, AALT…LASL, and AYMV…TQVV.

It belongs to the glycoside-pentoside-hexuronide (GPH) cation symporter transporter (TC 2.A.2) family. Expressed in the epididymis. Primarily expressed in the prostate, but also in other tissues.

The protein localises to the membrane. The enzyme catalyses sucrose(out) + H(+)(out) = sucrose(in) + H(+)(in). Its function is as follows. Proton-associated sucrose transporter. May be able to transport also glucose and fructose. This chain is Solute carrier family 45 member 3 (Slc45a3), found in Mus musculus (Mouse).